The chain runs to 198 residues: Holliday junction branch migration complex subunit RuvA (198 aa).

Residues 1 to 63 (MYSYIIGVIT…EDASILYGFS (63 aa)) form a domain I region. A domain II region spans residues 64-142 (SQKERELFNL…KDFVPSEKPV (79 aa)). The tract at residues 143-153 (NKEVKRSNDSE) is flexible linker. The segment at 153-198 (EFAREALLQLGYFKNDVDAFIENTDISGLSIEDIMKKAMKSLDSSR) is domain III.

Belongs to the RuvA family. In terms of assembly, homotetramer. Forms an RuvA(8)-RuvB(12)-Holliday junction (HJ) complex. HJ DNA is sandwiched between 2 RuvA tetramers; dsDNA enters through RuvA and exits via RuvB. An RuvB hexamer assembles on each DNA strand where it exits the tetramer. Each RuvB hexamer is contacted by two RuvA subunits (via domain III) on 2 adjacent RuvB subunits; this complex drives branch migration. In the full resolvosome a probable DNA-RuvA(4)-RuvB(12)-RuvC(2) complex forms which resolves the HJ.

It is found in the cytoplasm. Functionally, the RuvA-RuvB-RuvC complex processes Holliday junction (HJ) DNA during genetic recombination and DNA repair, while the RuvA-RuvB complex plays an important role in the rescue of blocked DNA replication forks via replication fork reversal (RFR). RuvA specifically binds to HJ cruciform DNA, conferring on it an open structure. The RuvB hexamer acts as an ATP-dependent pump, pulling dsDNA into and through the RuvAB complex. HJ branch migration allows RuvC to scan DNA until it finds its consensus sequence, where it cleaves and resolves the cruciform DNA. The chain is Holliday junction branch migration complex subunit RuvA from Finegoldia magna (strain ATCC 29328 / DSM 20472 / WAL 2508) (Peptostreptococcus magnus).